Reading from the N-terminus, the 164-residue chain is Protein SprT (164 aa).

The SprT-like domain occupies 14-156 (QQAETFFKRP…LCKRCRAILV (143 aa)). His69 contacts Zn(2+). Glu70 is an active-site residue. His73 contributes to the Zn(2+) binding site.

This sequence belongs to the SprT family. The cofactor is Zn(2+).

The protein resides in the cytoplasm. The protein is Protein SprT of Pseudomonas putida (strain GB-1).